Here is a 1377-residue protein sequence, read N- to C-terminus: DNA-directed RNA polymerase subunit beta (1377 aa).

This sequence belongs to the RNA polymerase beta chain family. The RNAP catalytic core consists of 2 alpha, 1 beta, 1 beta' and 1 omega subunit. When a sigma factor is associated with the core the holoenzyme is formed, which can initiate transcription.

The catalysed reaction is RNA(n) + a ribonucleoside 5'-triphosphate = RNA(n+1) + diphosphate. Its function is as follows. DNA-dependent RNA polymerase catalyzes the transcription of DNA into RNA using the four ribonucleoside triphosphates as substrates. In Campylobacter lari (strain RM2100 / D67 / ATCC BAA-1060), this protein is DNA-directed RNA polymerase subunit beta.